The following is an 80-amino-acid chain: UPF0291 protein YlaC (80 aa).

Belongs to the UPF0291 family.

It is found in the cytoplasm. This chain is UPF0291 protein YlaC (ylcA), found in Lactococcus lactis subsp. lactis (strain IL1403) (Streptococcus lactis).